The sequence spans 391 residues: Isochorismate synthase EntC (391 aa).

Residues Thr140, Thr142, Val145, and Asp146 each contribute to the Mg(2+) site. Lys147 functions as the Proton acceptor in the catalytic mechanism. Glu197 functions as the Proton donor in the catalytic mechanism. Positions 214, 215, 241, 303, 347, and 361 each coordinate isochorismate. Mg(2+) is bound at residue Glu241. Glu376 is a binding site for Mg(2+). Lys380 serves as a coordination point for isochorismate.

Belongs to the isochorismate synthase family. Monomer. Forms a specific pairwise interaction with EntB; this interaction likely facilitates substrate channeling to connect the EntB and EntC active sites. Requires Mg(2+) as cofactor.

It catalyses the reaction chorismate = isochorismate. Its pathway is siderophore biosynthesis; enterobactin biosynthesis. Its function is as follows. Involved in the biosynthesis of the siderophore enterobactin (macrocyclic trimeric lactone of N-(2,3-dihydroxybenzoyl)-serine). Catalyzes the reversible conversion of chorismate to isochorismate. This is Isochorismate synthase EntC from Escherichia coli O157:H7.